We begin with the raw amino-acid sequence, 74 residues long: Cytochrome c oxidase subunit 3 (74 aa).

The next 2 membrane-spanning stretches (helical) occupy residues 15-37 and 42-59; these read SPWP…KWFH and SLFL…YQWW.

This sequence belongs to the cytochrome c oxidase subunit 3 family. As to quaternary structure, component of the cytochrome c oxidase (complex IV, CIV), a multisubunit enzyme composed of a catalytic core of 3 subunits and several supernumerary subunits. The complex exists as a monomer or a dimer and forms supercomplexes (SCs) in the inner mitochondrial membrane with ubiquinol-cytochrome c oxidoreductase (cytochrome b-c1 complex, complex III, CIII).

It is found in the mitochondrion inner membrane. It catalyses the reaction 4 Fe(II)-[cytochrome c] + O2 + 8 H(+)(in) = 4 Fe(III)-[cytochrome c] + 2 H2O + 4 H(+)(out). Its function is as follows. Component of the cytochrome c oxidase, the last enzyme in the mitochondrial electron transport chain which drives oxidative phosphorylation. The respiratory chain contains 3 multisubunit complexes succinate dehydrogenase (complex II, CII), ubiquinol-cytochrome c oxidoreductase (cytochrome b-c1 complex, complex III, CIII) and cytochrome c oxidase (complex IV, CIV), that cooperate to transfer electrons derived from NADH and succinate to molecular oxygen, creating an electrochemical gradient over the inner membrane that drives transmembrane transport and the ATP synthase. Cytochrome c oxidase is the component of the respiratory chain that catalyzes the reduction of oxygen to water. Electrons originating from reduced cytochrome c in the intermembrane space (IMS) are transferred via the dinuclear copper A center (CU(A)) of subunit 2 and heme A of subunit 1 to the active site in subunit 1, a binuclear center (BNC) formed by heme A3 and copper B (CU(B)). The BNC reduces molecular oxygen to 2 water molecules using 4 electrons from cytochrome c in the IMS and 4 protons from the mitochondrial matrix. In Drosophila simulans (Fruit fly), this protein is Cytochrome c oxidase subunit 3 (mt:CoIII).